Here is a 198-residue protein sequence, read N- to C-terminus: Recombination protein RecR (198 aa).

The C4-type zinc finger occupies cysteine 57 to cysteine 72. The Toprim domain occupies serine 80–proline 175.

This sequence belongs to the RecR family.

In terms of biological role, may play a role in DNA repair. It seems to be involved in an RecBC-independent recombinational process of DNA repair. It may act with RecF and RecO. This chain is Recombination protein RecR, found in Bacillus cytotoxicus (strain DSM 22905 / CIP 110041 / 391-98 / NVH 391-98).